The chain runs to 1220 residues: Protein transport protein Sec31A (1220 aa).

WD repeat units lie at residues 4-47 (KEVD…EIFE), 68-111 (RYHK…AGDK), 120-160 (KHTG…TPMT), 166-206 (QPPE…PIIK), 209-254 (DHSN…SPLR), 258-298 (NHAR…VLYE), and 301-342 (TNTQ…DGLR). The tract at residues 161–471 (PGAKTQPPED…IDASQTEFEK (311 aa)) is interaction with SEC13. One copy of the WD 8; interaction with SEC13 repeat lies at 397 to 430 (SFSFGGKLVTFENVRMPSHQGAEQQQQQHHVFIS). 2 positions are modified to phosphoserine: Ser527 and Ser532. Residue Lys647 forms a Glycyl lysine isopeptide (Lys-Gly) (interchain with G-Cter in ubiquitin) linkage. 2 disordered regions span residues 791 to 908 (GEPV…NAYP) and 924 to 1096 (QLYA…GNTF). Ser799 is subject to Phosphoserine. Residues 800-1113 (PKIPYEKQQL…TKKITKKPIP (314 aa)) form an interaction with PDCD6 region. The short motif at 842-848 (GFIMHGN) is the ALG-2-binding site motif-2 (ABS-2) element. The span at 849-859 (VNPNAAGQLPT) shows a compositional bias: polar residues. Residues 869 to 882 (PPYPQPQPYQPAQP) show a composition bias toward pro residues. Residues 962–972 (PSSSAYALPPG) are compositionally biased toward low complexity. Polar residues-rich tracts occupy residues 984-995 (PASQRTGPQNGW) and 1031-1053 (PQSQ…SSFP). Position 1161 is a phosphothreonine (Thr1161). Ser1163 bears the Phosphoserine mark. Residue Lys1217 forms a Glycyl lysine isopeptide (Lys-Gly) (interchain with G-Cter in ubiquitin) linkage.

This sequence belongs to the WD repeat SEC31 family. In terms of assembly, COPII is composed of at least 5 proteins: the SEC23/24 complex, the SEC13/31 complex and SAR1. SEC13 and SEC31 make a 2:2 tetramer that forms the edge element of the COPII outer coat. The tetramer self-assembles in multiple copies to form the complete polyhedral cage. Interacts (via WD 8) with SEC13. Interacts with PDCD6; interaction takes place in response to cytosolic calcium increase and leads to bridge together the BCR(KLHL12) complex and SEC31A, leading to monoubiquitination. Interacts with KLHL12. Post-translationally, monoubiquitinated by the BCR(KLHL12) E3 ubiquitin ligase complex, leading to regulate the size of COPII coats. Abundantly and ubiquitously expressed.

The protein localises to the cytoplasm. The protein resides in the cytoplasmic vesicle. It localises to the COPII-coated vesicle membrane. Its subcellular location is the endoplasmic reticulum membrane. It is found in the cytosol. Component of the coat protein complex II (COPII) which promotes the formation of transport vesicles from the endoplasmic reticulum (ER). The coat has two main functions, the physical deformation of the endoplasmic reticulum membrane into vesicles and the selection of cargo molecules. The sequence is that of Protein transport protein Sec31A (SEC31A) from Homo sapiens (Human).